Reading from the N-terminus, the 428-residue chain is Elongation factor 1-alpha (428 aa).

One can recognise a tr-type G domain in the interval 5-215 (KPHVNIVFIG…ALDQIPEPPK (211 aa)). The interval 14-21 (GHVDHGKS) is G1. 14 to 21 (GHVDHGKS) provides a ligand contact to GTP. Ser-21 contacts Mg(2+). Positions 68 to 72 (GITID) are G2. The segment at 89–92 (DAPG) is G3. Residues 89–93 (DAPGH) and 144–147 (NKMD) contribute to the GTP site. The tract at residues 144–147 (NKMD) is G4. Positions 181 to 183 (SAW) are G5.

It belongs to the TRAFAC class translation factor GTPase superfamily. Classic translation factor GTPase family. EF-Tu/EF-1A subfamily.

It is found in the cytoplasm. It catalyses the reaction GTP + H2O = GDP + phosphate + H(+). GTP hydrolase that promotes the GTP-dependent binding of aminoacyl-tRNA to the A-site of ribosomes during protein biosynthesis. In Thermococcus gammatolerans (strain DSM 15229 / JCM 11827 / EJ3), this protein is Elongation factor 1-alpha.